A 236-amino-acid chain; its full sequence is Uridylate kinase (236 aa).

Position 10-13 (10-13 (KLSG)) interacts with ATP. Residue Gly-52 coordinates UMP. Residues Gly-53 and Arg-57 each coordinate ATP. Residues Asp-72 and 133–140 (TGNPFFTT) contribute to the UMP site. The ATP site is built by Thr-160, Tyr-166, and Asp-169.

Belongs to the UMP kinase family. In terms of assembly, homohexamer.

The protein resides in the cytoplasm. It catalyses the reaction UMP + ATP = UDP + ADP. Its pathway is pyrimidine metabolism; CTP biosynthesis via de novo pathway; UDP from UMP (UMPK route): step 1/1. Its activity is regulated as follows. Inhibited by UTP. In terms of biological role, catalyzes the reversible phosphorylation of UMP to UDP. This chain is Uridylate kinase, found in Polaromonas sp. (strain JS666 / ATCC BAA-500).